The sequence spans 197 residues: DNA helicase/primase complex protein (197 aa).

It belongs to the herpesviridae UL52 family.

In terms of biological role, involved in DNA replication. The polypeptide is DNA helicase/primase complex protein (7) (Equus caballus (Horse)).